The primary structure comprises 163 residues: Campylobacter invasion antigen D (163 aa).

The short motif at 135–145 (KKDDLENRLNL) is the MKD element.

As to quaternary structure, interacts with the host cell protein IQGAP1, thus displacing RACGAP1 from the IQGAP1 complex.

The protein resides in the secreted. It localises to the host cytoplasm. Its subcellular location is the host cytosol. In terms of biological role, effector protein required for the development of acute disease and colon inflammatory lesions. Required for maximal host cell invasion and maximal secretion of the inflammatory chemokine interleukin-8 (IL-8) from host cells. Acts by activating the host MAP kinase signaling pathways ERK-1/2 and p38 to promote both cellular invasion and the release of IL-8. CiaD mediated activation of ERK-1/2 leads to the phosphorylation of host cortactin (CTTN) on serine residues and association of cortactin with N-WASP, promoting actin cytoskeleton rearrangement, membrane ruffling and host cell invasion. In addition, maximal host cell invasion requires interaction with the host cell protein IQGAP1, a Ras GTPase-activating-like protein. Binding to IQGAP1 facilitates the activation of the Rho GTPases RAC1 and CDC42, further promoting actin reorganization and bacterial uptake. CiaD promotes RAC1 activation by excluding RACGAP1 from the IQGAP1 complex, preventing the deactivation of RAC1. CiaD probably activates ERK signaling upstream or independently of IQGAP1. The polypeptide is Campylobacter invasion antigen D (Campylobacter jejuni subsp. jejuni serotype O:2 (strain ATCC 700819 / NCTC 11168)).